The primary structure comprises 334 residues: Cathepsin J (334 aa).

The first 17 residues, 1–17 (MTPTVLLLILCFGVASG), serve as a signal peptide directing secretion. The propeptide at 18 to 113 (AQAHDPKLDA…PHAQNHVSIG (96 aa)) is activation peptide. A glycan (N-linked (GlcNAc...) asparagine) is linked at Asn-72. Intrachain disulfides connect Cys-135–Cys-178 and Cys-169–Cys-211. The active site involves Cys-138. Asn-217, Asn-221, and Asn-268 each carry an N-linked (GlcNAc...) asparagine glycan. A disulfide bridge links Cys-269 with Cys-322. Residues His-276 and Asn-300 contribute to the active site.

This sequence belongs to the peptidase C1 family. Expressed specifically in placenta.

Its subcellular location is the lysosome. The chain is Cathepsin J (Ctsj) from Mus musculus (Mouse).